The following is a 145-amino-acid chain: MKLNELKYTPGSKTKATIVGRGMASGKGKTATRGHKGQNSRSGGGVRPGFEGGQTPLFRRLPKVGFTSLNQKQYTILNLSDLETLGLEKIDHESLINSKIIKNNASLIKILANGTLTKKVDVKVNKISKAAKDAIEKLGGKVEVI.

Residues 20 to 54 (GRGMASGKGKTATRGHKGQNSRSGGGVRPGFEGGQ) form a disordered region. Positions 42–52 (SGGGVRPGFEG) are enriched in gly residues.

It belongs to the universal ribosomal protein uL15 family. In terms of assembly, part of the 50S ribosomal subunit.

In terms of biological role, binds to the 23S rRNA. The polypeptide is Large ribosomal subunit protein uL15 (Mycoplasma mycoides subsp. mycoides SC (strain CCUG 32753 / NCTC 10114 / PG1)).